A 276-amino-acid chain; its full sequence is 4-hydroxy-3-methylbut-2-enyl diphosphate reductase (276 aa).

Cysteine 12 lines the [4Fe-4S] cluster pocket. 2 residues coordinate (2E)-4-hydroxy-3-methylbut-2-enyl diphosphate: histidine 36 and histidine 70. Positions 36 and 70 each coordinate dimethylallyl diphosphate. Isopentenyl diphosphate is bound by residues histidine 36 and histidine 70. Residue cysteine 92 coordinates [4Fe-4S] cluster. Residue histidine 120 coordinates (2E)-4-hydroxy-3-methylbut-2-enyl diphosphate. Dimethylallyl diphosphate is bound at residue histidine 120. Histidine 120 lines the isopentenyl diphosphate pocket. Glutamate 122 acts as the Proton donor in catalysis. Position 158 (threonine 158) interacts with (2E)-4-hydroxy-3-methylbut-2-enyl diphosphate. Cysteine 186 contacts [4Fe-4S] cluster. Residues serine 214, serine 215, asparagine 216, and serine 258 each coordinate (2E)-4-hydroxy-3-methylbut-2-enyl diphosphate. Dimethylallyl diphosphate is bound by residues serine 214, serine 215, asparagine 216, and serine 258. Isopentenyl diphosphate is bound by residues serine 214, serine 215, asparagine 216, and serine 258.

Belongs to the IspH family. Requires [4Fe-4S] cluster as cofactor.

The catalysed reaction is isopentenyl diphosphate + 2 oxidized [2Fe-2S]-[ferredoxin] + H2O = (2E)-4-hydroxy-3-methylbut-2-enyl diphosphate + 2 reduced [2Fe-2S]-[ferredoxin] + 2 H(+). The enzyme catalyses dimethylallyl diphosphate + 2 oxidized [2Fe-2S]-[ferredoxin] + H2O = (2E)-4-hydroxy-3-methylbut-2-enyl diphosphate + 2 reduced [2Fe-2S]-[ferredoxin] + 2 H(+). The protein operates within isoprenoid biosynthesis; dimethylallyl diphosphate biosynthesis; dimethylallyl diphosphate from (2E)-4-hydroxy-3-methylbutenyl diphosphate: step 1/1. It participates in isoprenoid biosynthesis; isopentenyl diphosphate biosynthesis via DXP pathway; isopentenyl diphosphate from 1-deoxy-D-xylulose 5-phosphate: step 6/6. Functionally, catalyzes the conversion of 1-hydroxy-2-methyl-2-(E)-butenyl 4-diphosphate (HMBPP) into a mixture of isopentenyl diphosphate (IPP) and dimethylallyl diphosphate (DMAPP). Acts in the terminal step of the DOXP/MEP pathway for isoprenoid precursor biosynthesis. This chain is 4-hydroxy-3-methylbut-2-enyl diphosphate reductase, found in Wolinella succinogenes (strain ATCC 29543 / DSM 1740 / CCUG 13145 / JCM 31913 / LMG 7466 / NCTC 11488 / FDC 602W) (Vibrio succinogenes).